The chain runs to 390 residues: Succinate--CoA ligase [ADP-forming] subunit beta (390 aa).

The ATP-grasp domain maps to 9 to 248 (KDILRKFGVS…ISEEDPFEVE (240 aa)). Residues Lys50, 57 to 59 (GRG), Glu103, Met106, and Glu111 each bind ATP. 2 residues coordinate Mg(2+): Asn203 and Asp217. Substrate-binding positions include Asn268 and 325–327 (GIV).

Belongs to the succinate/malate CoA ligase beta subunit family. In terms of assembly, heterotetramer of two alpha and two beta subunits. Mg(2+) serves as cofactor.

It carries out the reaction succinate + ATP + CoA = succinyl-CoA + ADP + phosphate. It catalyses the reaction GTP + succinate + CoA = succinyl-CoA + GDP + phosphate. The protein operates within carbohydrate metabolism; tricarboxylic acid cycle; succinate from succinyl-CoA (ligase route): step 1/1. Its function is as follows. Succinyl-CoA synthetase functions in the citric acid cycle (TCA), coupling the hydrolysis of succinyl-CoA to the synthesis of either ATP or GTP and thus represents the only step of substrate-level phosphorylation in the TCA. The beta subunit provides nucleotide specificity of the enzyme and binds the substrate succinate, while the binding sites for coenzyme A and phosphate are found in the alpha subunit. The chain is Succinate--CoA ligase [ADP-forming] subunit beta from Prosthecochloris aestuarii (strain DSM 271 / SK 413).